A 750-amino-acid chain; its full sequence is Protein psiO (750 aa).

The N-terminal stretch at 1–22 is a signal peptide; sequence MKEKIKLSLLILTSIILAVANS. At 23–688 the chain is on the extracellular side; that stretch reads QTQPKTLAMT…GCNTAAVVST (666 aa). A glycan (N-linked (GlcNAc...) asparagine) is linked at asparagine 129. The PA14 domain maps to 140-286; that stretch reads QEYFPINGKG…DDYCGVCNGD (147 aa). N-linked (GlcNAc...) asparagine glycosylation is found at asparagine 447, asparagine 506, asparagine 554, asparagine 571, and asparagine 659. A helical membrane pass occupies residues 689–709; sequence AVIAGVTVAAVVGLGIFLYGG. At 710-750 the chain is on the cytoplasmic side; that stretch reads KKGYDYYQDNKSKGMTGANSNPLYKESGNAGQNPLYNDNNL. Positions 727–750 are disordered; it reads ANSNPLYKESGNAGQNPLYNDNNL. A compositionally biased stretch (polar residues) spans 738–750; that stretch reads NAGQNPLYNDNNL.

Belongs to the prespore-cell-inducing factor family.

The protein localises to the membrane. The polypeptide is Protein psiO (psiO) (Dictyostelium discoideum (Social amoeba)).